Here is a 269-residue protein sequence, read N- to C-terminus: Cytochrome c oxidase subunit 3 (269 aa).

7 helical membrane passes run 24–44 (LFTS…MHGF), 46–66 (GFQY…GLWF), 90–110 (GVGL…WAFF), 138–160 (PLLN…HSLI), 167–187 (ALYG…FQGV), 207–227 (FGTG…AVGL), and 247–267 (ILYW…VYYW).

It belongs to the cytochrome c oxidase subunit 3 family. In terms of assembly, component of the cytochrome c oxidase (complex IV, CIV), a multisubunit enzyme composed of a catalytic core of 3 subunits and several supernumerary subunits. The complex exists as a monomer or a dimer and forms supercomplexes (SCs) in the inner mitochondrial membrane with ubiquinol-cytochrome c oxidoreductase (cytochrome b-c1 complex, complex III, CIII).

The protein resides in the mitochondrion inner membrane. It catalyses the reaction 4 Fe(II)-[cytochrome c] + O2 + 8 H(+)(in) = 4 Fe(III)-[cytochrome c] + 2 H2O + 4 H(+)(out). In terms of biological role, component of the cytochrome c oxidase, the last enzyme in the mitochondrial electron transport chain which drives oxidative phosphorylation. The respiratory chain contains 3 multisubunit complexes succinate dehydrogenase (complex II, CII), ubiquinol-cytochrome c oxidoreductase (cytochrome b-c1 complex, complex III, CIII) and cytochrome c oxidase (complex IV, CIV), that cooperate to transfer electrons derived from NADH and succinate to molecular oxygen, creating an electrochemical gradient over the inner membrane that drives transmembrane transport and the ATP synthase. Cytochrome c oxidase is the component of the respiratory chain that catalyzes the reduction of oxygen to water. Electrons originating from reduced cytochrome c in the intermembrane space (IMS) are transferred via the dinuclear copper A center (CU(A)) of subunit 2 and heme A of subunit 1 to the active site in subunit 1, a binuclear center (BNC) formed by heme A3 and copper B (CU(B)). The BNC reduces molecular oxygen to 2 water molecules using 4 electrons from cytochrome c in the IMS and 4 protons from the mitochondrial matrix. The protein is Cytochrome c oxidase subunit 3 (cox3) of Emericella nidulans (Aspergillus nidulans).